A 357-amino-acid chain; its full sequence is Protein-L-isoaspartate O-methyltransferase domain-containing protein 1 (357 aa).

A lipid anchor (N-myristoyl glycine) is attached at Gly-2. The active site involves Ser-64. AdoMet binding motif regions lie at residues 85–94 (LNLGSGTGYL), 160–164 (YDRIY), and 181–191 (LKVGGILVMPI). Residues 240-250 (VRNLQDLARIY) are BC-box. A disordered region spans residues 299 to 331 (PLDSEEDEKMEEDSKEEEEKEHIEAMKREEPPQ). Residues 301-317 (DSEEDEKMEEDSKEEEE) show a composition bias toward acidic residues. Residues 318 to 331 (KEHIEAMKREEPPQ) are compositionally biased toward basic and acidic residues. Positions 341-344 (LPLP) are CUL-box.

This sequence belongs to the methyltransferase superfamily. L-isoaspartyl/D-aspartyl protein methyltransferase family. In terms of assembly, component of the probable ECS(PCMTD1) E3 ubiquitin-protein ligase complex, at least composed of CUL5, ELOB, ELOC, RBX2 and PCMTD1. Interacts (via the BC-box) with ELOB and ELOC; the interaction is direct and stabilizes PCMTD1.

It localises to the cytoplasm. The protein resides in the membrane. Substrate recognition component of an ECS (Elongin BC-CUL5-SOCS-box protein) E3 ubiquitin ligase complex which mediates the ubiquitination and subsequent proteasomal degradation of target proteins. Specifically binds to the methyltransferase cofactor S-adenosylmethionine (AdoMet) via the N-terminal AdoMet binding motif, but does not display methyltransferase activity. May provide an alternate maintenance pathway for modified proteins by acting as a damage-specific E3 ubiquitin ligase adaptor protein. The protein is Protein-L-isoaspartate O-methyltransferase domain-containing protein 1 (Pcmtd1) of Mus musculus (Mouse).